We begin with the raw amino-acid sequence, 768 residues long: Protein ITPRID2 (768 aa).

3 disordered regions span residues Met-1–Ser-24, Leu-39–Glu-78, and Arg-98–Gly-124. Composition is skewed to polar residues over residues Leu-39–Ser-57 and Ser-102–Ser-122. 8 positions are modified to phosphoserine: Ser-153, Ser-177, Ser-246, Ser-248, Ser-255, Ser-268, Ser-276, and Ser-312. The segment at Ser-315–Pro-338 is disordered. Residues Val-316–His-334 are compositionally biased toward basic and acidic residues. Lys-317 participates in a covalent cross-link: Glycyl lysine isopeptide (Lys-Gly) (interchain with G-Cter in SUMO2). A phosphoserine mark is found at Ser-378 and Ser-411. A coiled-coil region spans residues Gln-468–Arg-546. A phosphoserine mark is found at Ser-549, Ser-564, Ser-569, Ser-572, Ser-627, and Ser-643. Disordered regions lie at residues Ile-605–Pro-647 and Ala-663–Glu-718. Residues Ser-610–Ser-627 are compositionally biased toward polar residues. Phosphothreonine is present on Thr-665. Residues Thr-667–Thr-677 are compositionally biased toward polar residues. Ser-670 carries the phosphoserine modification. Phosphothreonine is present on Thr-677. The segment covering Glu-682–Pro-694 has biased composition (acidic residues).

It is found in the cytoplasm. This is Protein ITPRID2 from Pongo abelii (Sumatran orangutan).